A 127-amino-acid chain; its full sequence is Aspartate 1-decarboxylase (127 aa).

Ser25 functions as the Schiff-base intermediate with substrate; via pyruvic acid in the catalytic mechanism. Ser25 bears the Pyruvic acid (Ser) mark. Thr57 is a binding site for substrate. Tyr58 serves as the catalytic Proton donor. Substrate is bound at residue 73 to 75; sequence GAA.

It belongs to the PanD family. As to quaternary structure, heterooctamer of four alpha and four beta subunits. It depends on pyruvate as a cofactor. In terms of processing, is synthesized initially as an inactive proenzyme, which is activated by self-cleavage at a specific serine bond to produce a beta-subunit with a hydroxyl group at its C-terminus and an alpha-subunit with a pyruvoyl group at its N-terminus.

The protein resides in the cytoplasm. The catalysed reaction is L-aspartate + H(+) = beta-alanine + CO2. It participates in cofactor biosynthesis; (R)-pantothenate biosynthesis; beta-alanine from L-aspartate: step 1/1. Catalyzes the pyruvoyl-dependent decarboxylation of aspartate to produce beta-alanine. The polypeptide is Aspartate 1-decarboxylase (Clostridium acetobutylicum (strain ATCC 824 / DSM 792 / JCM 1419 / IAM 19013 / LMG 5710 / NBRC 13948 / NRRL B-527 / VKM B-1787 / 2291 / W)).